Consider the following 598-residue polypeptide: Aspartate--tRNA(Asp/Asn) ligase (598 aa).

Glu-174 contributes to the L-aspartate binding site. Residues 198 to 201 (QQLK) are aspartate. Arg-220 lines the L-aspartate pocket. ATP-binding positions include 220–222 (RDE) and Gln-229. His-458 contributes to the L-aspartate binding site. Position 492 (Glu-492) interacts with ATP. L-aspartate is bound at residue Arg-499. Position 544-547 (544-547 (GIDR)) interacts with ATP.

Belongs to the class-II aminoacyl-tRNA synthetase family. Type 1 subfamily. In terms of assembly, homodimer.

The protein resides in the cytoplasm. It catalyses the reaction tRNA(Asx) + L-aspartate + ATP = L-aspartyl-tRNA(Asx) + AMP + diphosphate. Aspartyl-tRNA synthetase with relaxed tRNA specificity since it is able to aspartylate not only its cognate tRNA(Asp) but also tRNA(Asn). Reaction proceeds in two steps: L-aspartate is first activated by ATP to form Asp-AMP and then transferred to the acceptor end of tRNA(Asp/Asn). The protein is Aspartate--tRNA(Asp/Asn) ligase of Dehalococcoides mccartyi (strain CBDB1).